A 299-amino-acid polypeptide reads, in one-letter code: Tyrosine recombinase XerC (299 aa).

A Core-binding (CB) domain is found at 2–88 (SALQPLIDTY…ALRSFLDYLV (87 aa)). Positions 109–289 (PLPKNVSVDD…DFQHLSKIYD (181 aa)) constitute a Tyr recombinase domain. Residues Arg-148, Lys-172, His-241, Arg-244, and His-267 contribute to the active site. Residue Tyr-276 is the O-(3'-phospho-DNA)-tyrosine intermediate of the active site.

This sequence belongs to the 'phage' integrase family. XerC subfamily. Forms a cyclic heterotetrameric complex composed of two molecules of XerC and two molecules of XerD.

It is found in the cytoplasm. Site-specific tyrosine recombinase, which acts by catalyzing the cutting and rejoining of the recombining DNA molecules. The XerC-XerD complex is essential to convert dimers of the bacterial chromosome into monomers to permit their segregation at cell division. It also contributes to the segregational stability of plasmids. The polypeptide is Tyrosine recombinase XerC (Psychromonas ingrahamii (strain DSM 17664 / CCUG 51855 / 37)).